The chain runs to 377 residues: 23S rRNA (uracil(747)-C(5))-methyltransferase RlmC (377 aa).

Positions 3, 11, 14, and 87 each coordinate [4Fe-4S] cluster. Residues Gln212, Phe241, Glu262, and Asn307 each coordinate S-adenosyl-L-methionine. Cys334 functions as the Nucleophile in the catalytic mechanism.

Belongs to the class I-like SAM-binding methyltransferase superfamily. RNA M5U methyltransferase family. RlmC subfamily.

The catalysed reaction is uridine(747) in 23S rRNA + S-adenosyl-L-methionine = 5-methyluridine(747) in 23S rRNA + S-adenosyl-L-homocysteine + H(+). In terms of biological role, catalyzes the formation of 5-methyl-uridine at position 747 (m5U747) in 23S rRNA. The chain is 23S rRNA (uracil(747)-C(5))-methyltransferase RlmC from Proteus mirabilis (strain HI4320).